Consider the following 314-residue polypeptide: Probable cell division protein WhiA (314 aa).

The segment at residues serine 274–asparagine 308 is a DNA-binding region (H-T-H motif).

It belongs to the WhiA family.

Involved in cell division and chromosome segregation. This is Probable cell division protein WhiA from Staphylococcus aureus (strain USA300).